A 161-amino-acid polypeptide reads, in one-letter code: Ribonuclease P protein component 2 (161 aa).

It belongs to the eukaryotic/archaeal RNase P protein component 2 family. Consists of a catalytic RNA component and at least 4-5 protein subunits.

It is found in the cytoplasm. The enzyme catalyses Endonucleolytic cleavage of RNA, removing 5'-extranucleotides from tRNA precursor.. Its function is as follows. Part of ribonuclease P, a protein complex that generates mature tRNA molecules by cleaving their 5'-ends. This chain is Ribonuclease P protein component 2, found in Haloarcula marismortui (strain ATCC 43049 / DSM 3752 / JCM 8966 / VKM B-1809) (Halobacterium marismortui).